A 349-amino-acid chain; its full sequence is Aminomethyltransferase (349 aa).

This sequence belongs to the GcvT family. In terms of assembly, the glycine cleavage system is composed of four proteins: P, T, L and H.

It catalyses the reaction N(6)-[(R)-S(8)-aminomethyldihydrolipoyl]-L-lysyl-[protein] + (6S)-5,6,7,8-tetrahydrofolate = N(6)-[(R)-dihydrolipoyl]-L-lysyl-[protein] + (6R)-5,10-methylene-5,6,7,8-tetrahydrofolate + NH4(+). In terms of biological role, the glycine cleavage system catalyzes the degradation of glycine. This is Aminomethyltransferase from Thermus thermophilus (strain ATCC BAA-163 / DSM 7039 / HB27).